Here is a 396-residue protein sequence, read N- to C-terminus: Elongation factor Tu 2 (396 aa).

Residues 10–206 (KPHCNIGTIG…AVDAYIPQPE (197 aa)) form the tr-type G domain. The segment at 19–26 (GHVDHGKT) is G1. Residue 19 to 26 (GHVDHGKT) participates in GTP binding. T26 is a Mg(2+) binding site. The segment at 60–64 (GITIS) is G2. The G3 stretch occupies residues 81 to 84 (DCPG). GTP contacts are provided by residues 81-85 (DCPGH) and 136-139 (NKCD). The G4 stretch occupies residues 136-139 (NKCD). A G5 region spans residues 174-176 (SAL).

This sequence belongs to the TRAFAC class translation factor GTPase superfamily. Classic translation factor GTPase family. EF-Tu/EF-1A subfamily. In terms of assembly, monomer.

It is found in the cytoplasm. It carries out the reaction GTP + H2O = GDP + phosphate + H(+). Its function is as follows. GTP hydrolase that promotes the GTP-dependent binding of aminoacyl-tRNA to the A-site of ribosomes during protein biosynthesis. The protein is Elongation factor Tu 2 of Rhodopseudomonas palustris (strain BisB5).